We begin with the raw amino-acid sequence, 118 residues long: Large ribosomal subunit protein bL20 (118 aa).

It belongs to the bacterial ribosomal protein bL20 family.

In terms of biological role, binds directly to 23S ribosomal RNA and is necessary for the in vitro assembly process of the 50S ribosomal subunit. It is not involved in the protein synthesizing functions of that subunit. This is Large ribosomal subunit protein bL20 from Francisella tularensis subsp. tularensis (strain FSC 198).